The sequence spans 352 residues: Sperm equatorial segment protein 1 (352 aa).

An N-terminal signal peptide occupies residues 1–19; it reads MKSLVLLVALLLWSSSVPA. Asn128 is a glycosylation site (N-linked (GlcNAc...) asparagine). Residues 140–203 form a disordered region; that stretch reads IEKEEPEPEP…TESEDVPQLS (64 aa). The segment covering 166–193 has biased composition (polar residues); sequence TESSTSPYVTSYKSPVTTSDRSTGIEIS.

Belongs to the SPESP1 family. In terms of processing, glycosylated. In testis there are two predominant forms of 77- and 67-kDa and a form of 47-kDa, whereas in epididymal sperm from caput, corpus, and cauda there are two forms of 47- and 43-kDa. Testis forms contain complex carbohydrate residues. Epididymal sperm forms are N-glycosylated. Then undergoes significant glycosylation in the testis and that the majority of these glycoconjugates are removed by the time sperm reach the caput epididymis.

The protein localises to the cytoplasmic vesicle. It is found in the secretory vesicle. The protein resides in the acrosome. Involved in fertilization ability of sperm. This chain is Sperm equatorial segment protein 1, found in Macaca fascicularis (Crab-eating macaque).